Reading from the N-terminus, the 1142-residue chain is Collagen alpha-1(XIX) chain (1142 aa).

The N-terminal stretch at 1–23 (MRLTGPWKLWLWMSIFLLPASTS) is a signal peptide. The Laminin G-like domain maps to 50-234 (NKLEVSGFDL…LHQLKIYCSA (185 aa)). Disordered regions lie at residues 288-680 (IPNK…GDPI), 704-1009 (PGLK…PGIP), and 1053-1142 (YGRP…TGGN). 3 consecutive Collagen-like domains span residues 292–349 (GEAG…GEKG), 350–391 (DPAL…ALPG), and 392–433 (SLGI…GIQG). Positions 292–351 (GEAGLPGAPGSPGQKGHKGEPGENGLHGAPGFPGQKGEQGFEGSKGETGEKGEQGEKGDP) are triple-helical region 1 (COL1). Residues 335-350 (SKGETGEKGEQGEKGD) show a composition bias toward basic and acidic residues. The segment at 370-429 (GPPGPKGEKGDTGPPGPPALPGSLGIQGPQGPPGKEGQRGRRGKTGPPGKPGPPGPPGPP) is triple-helical region 2 (COL2). The segment covering 390–404 (PGSLGIQGPQGPPGK) has biased composition (low complexity). Over residues 417–429 (PGKPGPPGPPGPP) the composition is skewed to pro residues. 2 stretches are compositionally biased toward basic and acidic residues: residues 444-463 (KDNKGNDEHEAGGLKGDKGE) and 478-496 (QKGEPGEPFTKGEKGDRGE). The tract at residues 448–688 (GNDEHEAGGL…PIALPLLGDI (241 aa)) is triple-helical region 3 (COL3). Collagen-like domains lie at 474-516 (GPKG…GPPG), 568-624 (GPPG…GPQG), 626-678 (GIPG…PPGD), 728-778 (KGDI…APGP), 779-814 (TGPPGLMGRTGHPGPTGAKGEKGSDGPPGKPGPPGP), 845-903 (GPPG…VPGE), 904-947 (PGER…GDRG), and 948-1004 (PKGE…GSPG). Residues 640 to 651 (PGIQGPRGLPGL) show a composition bias toward low complexity. Residues 700 to 818 (QASVPGLKSN…PGPPGPPGIP (119 aa)) form a triple-helical region 4 (COL4) region. Basic and acidic residues-rich tracts occupy residues 720-731 (GKYDSMARKGDI) and 743-752 (EGPKGSKGER). 2 stretches are compositionally biased toward pro residues: residues 806–817 (PGKPGPPGPPGI) and 840–852 (YPGPPGPPGPKGD). Positions 833 to 1012 (GGVNVPSYPG…PGIPGIPADA (180 aa)) are triple-helical region 5 (COL5). The span at 943-954 (PGDRGPKGERGD) shows a compositional bias: basic and acidic residues. Positions 952–954 (RGD) match the Cell attachment site motif. The interval 1054-1111 (GRPGPPGKDGLPGPPGDPGPQGYRGQKGERGEPGIGLPGSPGLPGTSALGLPGSPGAP) is triple-helical region 6 (COL6). Positions 1093-1107 (SPGLPGTSALGLPGS) are enriched in low complexity. Residues 1108–1119 (PGAPGPQGPPGP) are compositionally biased toward pro residues.

This sequence belongs to the fibril-associated collagens with interrupted helices (FACIT) family. Oligomer; disulfide-linked. Post-translationally, prolines at the third position of the tripeptide repeating unit (G-X-Y) are hydroxylated in some or all of the chains. In terms of tissue distribution, localized to vascular, neuronal, mesenchymal, and some epithelial basement membrane zones in umbilical cord.

It localises to the secreted. The protein resides in the extracellular space. The protein localises to the extracellular matrix. In terms of biological role, may act as a cross-bridge between fibrils and other extracellular matrix molecules. Involved in skeletal myogenesis in the developing esophagus. May play a role in organization of the pericellular matrix or the sphinteric smooth muscle. The protein is Collagen alpha-1(XIX) chain (COL19A1) of Homo sapiens (Human).